A 294-amino-acid polypeptide reads, in one-letter code: N-acetylmuramic acid 6-phosphate etherase (294 aa).

The 164-residue stretch at 54-217 (VIKSFEEEGR…STASMIGVGK (164 aa)) folds into the SIS domain. Glu82 serves as the catalytic Proton donor. Glu113 is a catalytic residue.

Belongs to the GCKR-like family. MurNAc-6-P etherase subfamily. As to quaternary structure, homodimer.

The enzyme catalyses N-acetyl-D-muramate 6-phosphate + H2O = N-acetyl-D-glucosamine 6-phosphate + (R)-lactate. It participates in amino-sugar metabolism; N-acetylmuramate degradation. Functionally, specifically catalyzes the cleavage of the D-lactyl ether substituent of MurNAc 6-phosphate, producing GlcNAc 6-phosphate and D-lactate. This chain is N-acetylmuramic acid 6-phosphate etherase, found in Bacillus cereus (strain ATCC 10987 / NRS 248).